Reading from the N-terminus, the 216-residue chain is Refilin-B (216 aa).

The tract at residues 1-52 (MVGRLSLQDVPELVDTKKKGDGVLDSPDSGLPPSPSPSHWGLAAATGGGGER) is disordered. Phosphoserine is present on residues Ser-6 and Ser-26.

It belongs to the Refilin family. As to quaternary structure, interacts with FLNA and FLNB.

The protein resides in the cytoplasm. It is found in the cytoskeleton. In terms of biological role, involved in the regulation of the perinuclear actin network and nuclear shape through interaction with filamins. Plays an essential role in the formation of cartilaginous skeletal elements. This is Refilin-B from Rattus norvegicus (Rat).